The chain runs to 157 residues: 6,7-dimethyl-8-ribityllumazine synthase 1 (157 aa).

Residues phenylalanine 22, 53–55, and 82–84 contribute to the 5-amino-6-(D-ribitylamino)uracil site; these read ALE and TVI. 87-88 is a (2S)-2-hydroxy-3-oxobutyl phosphate binding site; it reads ET. Histidine 90 functions as the Proton donor in the catalytic mechanism. Asparagine 115 lines the 5-amino-6-(D-ribitylamino)uracil pocket. Arginine 129 contacts (2S)-2-hydroxy-3-oxobutyl phosphate.

It belongs to the DMRL synthase family. In terms of assembly, homopentamer.

The enzyme catalyses (2S)-2-hydroxy-3-oxobutyl phosphate + 5-amino-6-(D-ribitylamino)uracil = 6,7-dimethyl-8-(1-D-ribityl)lumazine + phosphate + 2 H2O + H(+). The protein operates within cofactor biosynthesis; riboflavin biosynthesis; riboflavin from 2-hydroxy-3-oxobutyl phosphate and 5-amino-6-(D-ribitylamino)uracil: step 1/2. Functionally, catalyzes the formation of 6,7-dimethyl-8-ribityllumazine by condensation of 5-amino-6-(D-ribitylamino)uracil with 3,4-dihydroxy-2-butanone 4-phosphate. This is the penultimate step in the biosynthesis of riboflavin. The sequence is that of 6,7-dimethyl-8-ribityllumazine synthase 1 (ribH1) from Brucella melitensis biotype 1 (strain ATCC 23456 / CCUG 17765 / NCTC 10094 / 16M).